A 555-amino-acid polypeptide reads, in one-letter code: Solute carrier family 22 member 2 (555 aa).

Topologically, residues 1 to 21 are cytoplasmic; sequence MPTTVDDVLEHGGEFHFFQKQ. Residues 22 to 42 form a helical membrane-spanning segment; sequence MFFLLALLSATFTPIYVGIVF. Residues 43–150 lie on the Extracellular side of the membrane; sequence LGFTPDHRCR…LVCANSWMLD (108 aa). An N-linked (GlcNAc...) asparagine glycan is attached at Asn-72. Residues 151 to 171 traverse the membrane as a helical segment; that stretch reads LFQASVNVGFFFGSVSIGYIA. The Cytoplasmic segment spans residues 172–177; sequence DRFGRK. Residues 178–198 traverse the membrane as a helical segment; that stretch reads LCLLTTVLINAAAGVLMAISP. The Extracellular segment spans residues 199–210; sequence TYTWMLIFRLIQ. A helical membrane pass occupies residues 211–231; sequence GLVSKAGWLIGYILITEFVGR. The Cytoplasmic segment spans residues 232–238; that stretch reads RYRRTVG. Residues 239-259 traverse the membrane as a helical segment; it reads IFYQVAYTVGLLVLAGVAYAL. The Extracellular portion of the chain corresponds to 260–263; the sequence is PHWR. A helical transmembrane segment spans residues 264–284; the sequence is WLQFTVTLPNFFFLLYYWCIP. Residues 284-288 carry the Proline-rich sequence motif; that stretch reads PESPR. Residues 285–348 lie on the Cytoplasmic side of the membrane; it reads ESPRWLISQN…VRTPQIRKHT (64 aa). Residues 349–369 form a helical membrane-spanning segment; it reads MILMYNWFTSSVLYQGLIMHM. Residues 370–375 lie on the Extracellular side of the membrane; the sequence is GLAGDN. Residues 376–396 form a helical membrane-spanning segment; it reads IYLDFFYSALVEFPAAFMIIV. The Cytoplasmic portion of the chain corresponds to 397–404; that stretch reads TIDRIGRR. A helical transmembrane segment spans residues 405-425; the sequence is YPWAASNMVAGAACLASVFIP. Over 426 to 432 the chain is Extracellular; that stretch reads GDLQWLK. Residues 433 to 453 form a helical membrane-spanning segment; sequence IIISCLGRMGITMAYEIVRLV. Topologically, residues 454–464 are cytoplasmic; sequence NAELYPTFIRN. The chain crosses the membrane as a helical span at residues 465 to 485; sequence LGVHICSSMCDIGGIITPFLV. At 486–494 the chain is on the extracellular side; the sequence is YRLTNIWLE. The chain crosses the membrane as a helical span at residues 495-515; it reads LPLMVFGVLGLVAGGLVLLLP. Topologically, residues 516–555 are cytoplasmic; sequence ETKGKALPETIEEAENMQRPRKNKEKMIYLQVQKLDIPLN.

This sequence belongs to the major facilitator (TC 2.A.1) superfamily. Organic cation transporter (TC 2.A.1.19) family. Post-translationally, tyrosine phosphorylated.

The protein resides in the basolateral cell membrane. Its subcellular location is the basal cell membrane. It is found in the apical cell membrane. It carries out the reaction (R)-noradrenaline(out) = (R)-noradrenaline(in). The enzyme catalyses (R)-adrenaline(out) = (R)-adrenaline(in). It catalyses the reaction serotonin(out) = serotonin(in). The catalysed reaction is dopamine(out) = dopamine(in). It carries out the reaction histamine(out) = histamine(in). The enzyme catalyses thiamine(in) = thiamine(out). It catalyses the reaction creatinine(in) = creatinine(out). The catalysed reaction is 1-methylnicotinamide(out) = 1-methylnicotinamide(in). It carries out the reaction guanidine(out) = guanidine(in). The enzyme catalyses choline(out) = choline(in). It catalyses the reaction agmatine(out) = agmatine(in). The catalysed reaction is putrescine(out) = putrescine(in). It carries out the reaction spermidine(in) = spermidine(out). The enzyme catalyses tyramine(in) = tyramine(out). It catalyses the reaction L-histidyl-L-proline diketopiperazine(in) = L-histidyl-L-proline diketopiperazine(out). The catalysed reaction is (R)-salsolinol(in) = (R)-salsolinol(out). It carries out the reaction N-methyl-(R)-salsolinol(in) = N-methyl-(R)-salsolinol(out). The enzyme catalyses acetylcholine(in) = acetylcholine(out). It catalyses the reaction prostaglandin F2alpha(out) = prostaglandin F2alpha(in). The catalysed reaction is prostaglandin E2(out) = prostaglandin E2(in). Its activity is regulated as follows. Tyrosine phosphorylation of the transporter leads to activation of the transport activity. Inhibited by cGMP, most likely through a cGMP-binding protein that interacts with OCT2. Electrogenic voltage-dependent transporter that mediates the transport of a variety of organic cations such as endogenous bioactive amines, cationic drugs and xenobiotics. Functions as a Na(+)-independent, bidirectional uniporter. Cation cellular uptake or release is driven by the electrochemical potential, i.e. membrane potential and concentration gradient. However, may also engage electroneutral cation exchange when saturating concentrations of cation substrates are reached. Predominantly expressed at the basolateral membrane of hepatocytes and proximal tubules and involved in the uptake and disposition of cationic compounds by hepatic and renal clearance from the blood flow. Implicated in monoamine neurotransmitters uptake such as histamine, dopamine, adrenaline/epinephrine, noradrenaline/norepinephrine, serotonin and tyramine, thereby supporting a physiological role in the central nervous system by regulating interstitial concentrations of neurotransmitters. Also capable of transporting dopaminergic neuromodulators cyclo(his-pro), salsolinol and N-methyl-salsolinol, thereby involved in the maintenance of dopaminergic cell integrity in the central nervous system. Mediates the bidirectional transport of acetylcholine (ACh) at the apical membrane of ciliated cell in airway epithelium, thereby playing a role in luminal release of ACh from bronchial epithelium. Also transports guanidine and endogenous monoamines such as vitamin B1/thiamine, creatinine and N-1-methylnicotinamide (NMN). Mediates the uptake and efflux of quaternary ammonium compound choline. Mediates the bidirectional transport of polyamine agmatine and the uptake of polyamines putrescine and spermidine. Able to transport non-amine endogenous compounds such as prostaglandin E2 (PGE2) and prostaglandin F2-alpha (PGF2-alpha). Also involved in the uptake of xenobiotic 4-(4-(dimethylamino)styryl)-N-methylpyridinium (ASP). May contribute to regulate the transport of organic compounds in testis across the blood-testis-barrier. This is Solute carrier family 22 member 2 (SLC22A2) from Pongo abelii (Sumatran orangutan).